Consider the following 463-residue polypeptide: uncharacterized protein (463 aa).

12 helical membrane passes run 21-40 (DFAC…FFYT), 50-72 (AGTM…GTIV), 84-104 (PYLL…FTTP), 112-132 (LIYA…INVP), 156-176 (LFAN…AAYL), 186-206 (GWQL…IFCF), 237-257 (LVVL…SNSV), 271-291 (LVKW…PFIP), 311-331 (IIGL…ILVC), 334-354 (IAAA…PETI), 367-387 (GLIY…GGVV), and 408-428 (LMGI…LALI).

Belongs to the sodium:galactoside symporter (TC 2.A.2) family.

The protein localises to the cell membrane. This is an uncharacterized protein from Bacillus subtilis (strain 168).